A 172-amino-acid chain; its full sequence is MTARTMDAGTGDVTLFHTSQLDKLINMARENSLWYLLFGLACCGIELMQFGGPRADVMRFGAIPRASPRQADFMIVAGTLTYKMAERAKLLYDQMPEPKYVISMGSCSNCGGLFQLGYSVCKGVDKVIPVDVYVPGCPPRPEALTEGLIRLQELIRSEPWATKRRPAKGSAA.

C42, C43, C107, and C137 together coordinate [4Fe-4S] cluster.

Belongs to the complex I 20 kDa subunit family. NDH-1 is composed of 14 different subunits. Subunits NuoB, C, D, E, F, and G constitute the peripheral sector of the complex. The cofactor is [4Fe-4S] cluster.

It localises to the cell inner membrane. It catalyses the reaction a quinone + NADH + 5 H(+)(in) = a quinol + NAD(+) + 4 H(+)(out). Functionally, NDH-1 shuttles electrons from NADH, via FMN and iron-sulfur (Fe-S) centers, to quinones in the respiratory chain. Couples the redox reaction to proton translocation (for every two electrons transferred, four hydrogen ions are translocated across the cytoplasmic membrane), and thus conserves the redox energy in a proton gradient. In Anaeromyxobacter sp. (strain Fw109-5), this protein is NADH-quinone oxidoreductase subunit B 1.